Reading from the N-terminus, the 102-residue chain is RNA-binding protein Hfq (102 aa).

The Sm domain occupies 9-68 (DPFLNALRRERVPVSIYLVNGIKLQGQIESFDQFVILLKNTVSQMVYKHAISTVVPSRPV). A disordered region spans residues 63–102 (VPSRPVSHHSNNAGGGTSSNYHHGSSAQNTSAQQDSEETE). Polar residues predominate over residues 70–96 (HHSNNAGGGTSSNYHHGSSAQNTSAQQ).

It belongs to the Hfq family. In terms of assembly, homohexamer.

In terms of biological role, RNA chaperone that binds small regulatory RNA (sRNAs) and mRNAs to facilitate mRNA translational regulation in response to envelope stress, environmental stress and changes in metabolite concentrations. Also binds with high specificity to tRNAs. In Escherichia fergusonii (strain ATCC 35469 / DSM 13698 / CCUG 18766 / IAM 14443 / JCM 21226 / LMG 7866 / NBRC 102419 / NCTC 12128 / CDC 0568-73), this protein is RNA-binding protein Hfq.